The chain runs to 345 residues: UPF0324 membrane protein Cgl0015/cg0018 (345 aa).

10 helical membrane-spanning segments follow: residues 15-37 (LRTG…VLIA), 44-66 (FSGV…LIQL), 81-103 (LLRL…SLGF), 105-124 (MLAV…ILMG), 134-156 (VLLI…EGVT), 163-185 (VVTA…PFAT), 205-227 (EIAQ…AVVV), 261-280 (VVPL…STVA), 285-307 (VIAA…LGCG), and 320-342 (PFIL…TLLT).

Belongs to the UPF0324 family.

The protein resides in the cell membrane. The polypeptide is UPF0324 membrane protein Cgl0015/cg0018 (Corynebacterium glutamicum (strain ATCC 13032 / DSM 20300 / JCM 1318 / BCRC 11384 / CCUG 27702 / LMG 3730 / NBRC 12168 / NCIMB 10025 / NRRL B-2784 / 534)).